Here is a 257-residue protein sequence, read N- to C-terminus: Imidazole glycerol phosphate synthase subunit HisF (257 aa).

Residues aspartate 11 and aspartate 130 contribute to the active site.

The protein belongs to the HisA/HisF family. Heterodimer of HisH and HisF.

It localises to the cytoplasm. The enzyme catalyses 5-[(5-phospho-1-deoxy-D-ribulos-1-ylimino)methylamino]-1-(5-phospho-beta-D-ribosyl)imidazole-4-carboxamide + L-glutamine = D-erythro-1-(imidazol-4-yl)glycerol 3-phosphate + 5-amino-1-(5-phospho-beta-D-ribosyl)imidazole-4-carboxamide + L-glutamate + H(+). It functions in the pathway amino-acid biosynthesis; L-histidine biosynthesis; L-histidine from 5-phospho-alpha-D-ribose 1-diphosphate: step 5/9. IGPS catalyzes the conversion of PRFAR and glutamine to IGP, AICAR and glutamate. The HisF subunit catalyzes the cyclization activity that produces IGP and AICAR from PRFAR using the ammonia provided by the HisH subunit. This chain is Imidazole glycerol phosphate synthase subunit HisF, found in Shewanella putrefaciens (strain CN-32 / ATCC BAA-453).